Consider the following 312-residue polypeptide: DNA primase small subunit PriS (312 aa).

Residues Asp-88, Asp-90, and Asp-215 contribute to the active site.

The protein belongs to the eukaryotic-type primase small subunit family. In terms of assembly, heterodimer of a small subunit (PriS) and a large subunit (PriL). Requires Mg(2+) as cofactor. The cofactor is Mn(2+).

In terms of biological role, catalytic subunit of DNA primase, an RNA polymerase that catalyzes the synthesis of short RNA molecules used as primers for DNA polymerase during DNA replication. The small subunit contains the primase catalytic core and has DNA synthesis activity on its own. Binding to the large subunit stabilizes and modulates the activity, increasing the rate of DNA synthesis while decreasing the length of the DNA fragments, and conferring RNA synthesis capability. The DNA polymerase activity may enable DNA primase to also catalyze primer extension after primer synthesis. May also play a role in DNA repair. This chain is DNA primase small subunit PriS, found in Pyrobaculum islandicum (strain DSM 4184 / JCM 9189 / GEO3).